A 106-amino-acid polypeptide reads, in one-letter code: Small ribosomal subunit protein uS10 (106 aa).

Belongs to the universal ribosomal protein uS10 family. In terms of assembly, part of the 30S ribosomal subunit.

In terms of biological role, involved in the binding of tRNA to the ribosomes. In Prochlorococcus marinus (strain MIT 9303), this protein is Small ribosomal subunit protein uS10.